An 825-amino-acid chain; its full sequence is E3 ubiquitin-protein ligase ICP0 (825 aa).

The segment covering 1–10 (MEPRPGTSSR) has biased composition (polar residues). Residues 1–121 (MEPRPGTSSR…VGEEEAEAGG (121 aa)) form a disordered region. Positions 46-57 (DSEEETEVGISD) are enriched in acidic residues. An RING-type zinc finger spans residues 126–167 (CAVCTDEIAPPLRCQSFPCLHPFCIPCMKTWIPLRNTCPLCN). Disordered stretches follow at residues 221–312 (RSLS…GGGP), 325–683 (PPAA…PAPG), and 803–825 (RHPW…GHGE). Residues 242–251 (TDDEDDDLAD) show a composition bias toward acidic residues. Composition is skewed to low complexity over residues 273-283 (TRGTSQPAATR), 290-303 (PRSS…LRAG), and 350-367 (PPAR…VISD). The span at 368–379 (SPPPSPRRPAGP) shows a compositional bias: pro residues. Low complexity-rich tracts occupy residues 380 to 394 (GPLS…QVSS) and 402 to 439 (PQSS…DAAG). Residues 456 to 468 (RMTQAQTDTQAQS) show a composition bias toward polar residues. A compositionally biased stretch (gly residues) spans 479-491 (GSGGPGAEGGPGV). 2 stretches are compositionally biased toward low complexity: residues 492 to 510 (PRGT…GAAA) and 519 to 540 (DSGP…PLAP). The segment covering 552–563 (RAPDSDSGDRGH) has biased composition (basic and acidic residues). The segment covering 567 to 641 (APASAGAAPP…GGSVASASGA (75 aa)) has biased composition (low complexity). The span at 658–667 (GPRKCARKTR) shows a compositional bias: basic residues. Positions 811-825 (GAPAPAGDAPAGHGE) are enriched in low complexity.

Auto-ubiquitinated.

It catalyses the reaction S-ubiquitinyl-[E2 ubiquitin-conjugating enzyme]-L-cysteine + [acceptor protein]-L-lysine = [E2 ubiquitin-conjugating enzyme]-L-cysteine + N(6)-ubiquitinyl-[acceptor protein]-L-lysine.. Its function is as follows. Evades nuclear antiviral defenses triggered by dsDNA viruses. Acts during the initial stages of lytic infection and the reactivation of latent viral genome. Prevents the antiviral effect of nuclear bodies by degrading host PML and SP100. Prevents antiviral response to viral DNA induced by IFI16 by degrading it. Additionally, inhibits host IRF3 nuclear signaling to prevent interferon production by the infected cells. This is E3 ubiquitin-protein ligase ICP0 (RL2) from Homo sapiens (Human).